A 361-amino-acid polypeptide reads, in one-letter code: Phosphoserine aminotransferase (361 aa).

Arginine 43 provides a ligand contact to L-glutamate. Residues 77–78, tryptophan 103, threonine 153, aspartate 173, and glutamine 196 each bind pyridoxal 5'-phosphate; that span reads AS. Lysine 197 is modified (N6-(pyridoxal phosphate)lysine). 238 to 239 contacts pyridoxal 5'-phosphate; sequence NT.

This sequence belongs to the class-V pyridoxal-phosphate-dependent aminotransferase family. SerC subfamily. Homodimer. The cofactor is pyridoxal 5'-phosphate.

The protein resides in the cytoplasm. The enzyme catalyses O-phospho-L-serine + 2-oxoglutarate = 3-phosphooxypyruvate + L-glutamate. The catalysed reaction is 4-(phosphooxy)-L-threonine + 2-oxoglutarate = (R)-3-hydroxy-2-oxo-4-phosphooxybutanoate + L-glutamate. The protein operates within amino-acid biosynthesis; L-serine biosynthesis; L-serine from 3-phospho-D-glycerate: step 2/3. Its pathway is cofactor biosynthesis; pyridoxine 5'-phosphate biosynthesis; pyridoxine 5'-phosphate from D-erythrose 4-phosphate: step 3/5. In terms of biological role, catalyzes the reversible conversion of 3-phosphohydroxypyruvate to phosphoserine and of 3-hydroxy-2-oxo-4-phosphonooxybutanoate to phosphohydroxythreonine. This is Phosphoserine aminotransferase from Pseudomonas syringae pv. tomato (strain ATCC BAA-871 / DC3000).